The following is a 230-amino-acid chain: Cutinase 1 (230 aa).

Residues 1–16 (MKFFALTTLLAATASA) form the signal peptide. A propeptide spanning residues 17–31 (LPTSNPAQELEARQL) is cleaved from the precursor. G32 carries the post-translational modification N-D-glucuronoyl glycine. Residues C47 and C125 are joined by a disulfide bond. Catalysis depends on S136, which acts as the Nucleophile. C187 and C194 are oxidised to a cystine. D191 is a catalytic residue. The active-site Proton donor/acceptor is the H204.

Belongs to the cutinase family. Post-translationally, the 2 disulfide bonds play a critical role in holding the catalytic residues in juxta-position; reduction of the disulfide bridges results in the complete inactivation of the enzyme. In terms of processing, O-glycosylated; contains one mole each of mannose, arabinose, N-acetylglucosamine, and glucuronic acid.

The protein resides in the secreted. The catalysed reaction is cutin + H2O = cutin monomers.. Inhibited by n-undecyl phosphonate (C11Y4). Inhibited by paraoxon. In terms of biological role, catalyzes the hydrolysis of complex carboxylic polyesters found in the cell wall of plants. Degrades cutin, a macromolecule that forms the structure of the plant cuticle. Allows pathogenic fungi to penetrate through the cuticular barrier into the host plant during the initial stage of fungal infection. This Fusarium vanettenii (Neocosmospora pisi) protein is Cutinase 1 (CUT1).